We begin with the raw amino-acid sequence, 900 residues long: Phosphoenolpyruvate carboxylase (900 aa).

Catalysis depends on residues H140 and K568.

The protein belongs to the PEPCase type 1 family. The cofactor is Mg(2+).

It catalyses the reaction oxaloacetate + phosphate = phosphoenolpyruvate + hydrogencarbonate. In terms of biological role, forms oxaloacetate, a four-carbon dicarboxylic acid source for the tricarboxylic acid cycle. The chain is Phosphoenolpyruvate carboxylase from Neisseria meningitidis serogroup C / serotype 2a (strain ATCC 700532 / DSM 15464 / FAM18).